An 88-amino-acid polypeptide reads, in one-letter code: HssA/B-like protein 9 (88 aa).

Positions 1-14 (MSILSALTSISNPM) are enriched in polar residues. Residues 1 to 26 (MSILSALTSISNPMKSSKSSVANGGG) are disordered.

Belongs to the hssA/B family.

The chain is HssA/B-like protein 9 (hssl9) from Dictyostelium discoideum (Social amoeba).